The chain runs to 473 residues: Glutamate--tRNA ligase 1 (473 aa).

The 'HIGH' region signature appears at 23–33; sequence PSPTGLLHVGG. A 'KMSKS' region motif is present at residues 252–256; the sequence is KLSKR. Residue lysine 255 coordinates ATP.

It belongs to the class-I aminoacyl-tRNA synthetase family. Glutamate--tRNA ligase type 1 subfamily. In terms of assembly, monomer.

Its subcellular location is the cytoplasm. It carries out the reaction tRNA(Glu) + L-glutamate + ATP = L-glutamyl-tRNA(Glu) + AMP + diphosphate. Catalyzes the attachment of glutamate to tRNA(Glu) in a two-step reaction: glutamate is first activated by ATP to form Glu-AMP and then transferred to the acceptor end of tRNA(Glu). The sequence is that of Glutamate--tRNA ligase 1 from Granulibacter bethesdensis (strain ATCC BAA-1260 / CGDNIH1).